The following is a 305-amino-acid chain: ATP-dependent Clp protease proteolytic subunit-related protein 4, chloroplastic (305 aa).

A chloroplast-targeting transit peptide spans Met-1–Arg-68.

Belongs to the peptidase S14 family. Component of the chloroplastic Clp protease core complex which consist of at least 16 proteins: CLPP4 (3 copies), CLPP5 (3 copies), CLPR4 (2 copies), ClpP1 (1 copy), CLPP6 (1 copy), CLPR2 (1 copy), CLPT1 (1 copy), CLPT2 (1 copy) and 3 copies of CLPP3 and/or CLPR1 and/or CLPR3. The core complex is organized in two heptameric rings, one containing CLPP3,4,5,6 in a 1:2:3:1 ratio and the other CLPP1 and CLPR1,2,3,4 in a 3:1:1:1:1 ratio.

The protein resides in the plastid. It localises to the chloroplast. In terms of biological role, involved in plastid protein homeostasis. The protein is ATP-dependent Clp protease proteolytic subunit-related protein 4, chloroplastic of Arabidopsis thaliana (Mouse-ear cress).